The sequence spans 466 residues: Polycomb group protein FIE1 (466 aa).

Over residues 1–10 (MGPTSRNHKS) the composition is skewed to basic residues. The disordered stretch occupies residues 1–71 (MGPTSRNHKS…GEGEPQETVL (71 aa)). The span at 31–49 (SITASASASAFASPAVANS) shows a compositional bias: low complexity. 6 WD repeats span residues 167–209 (DMNE…IYKS), 212–252 (GHGG…LILV), 258–298 (GHRH…EYVE), 324–361 (IHSN…ENPG), 374–414 (PECN…PVLI), and 421–460 (QVKS…TAPV).

It belongs to the WD repeat ESC family. In terms of assembly, interacts with EZ1 and CLF. Component of the polycomb repressive complex 2 (PRC2), which methylates 'Lys-27' residues of histone H3 (H3K27me3), leading to transcriptional repression of the affected target gene. As to expression, expressed specifically in seed endosperm.

In terms of biological role, polycomb group (PcG) protein. PcG proteins act by forming multiprotein complexes, which are required to maintain the transcriptionally repressive state of homeotic genes throughout development. PcG proteins are not required to initiate repression, but to maintain it during later stages of development. They act via the methylation of histones, rendering chromatin heritably changed in its expressibility. Together with EZ1 and CLF forms a complex that is involved in gene transcriptional repression by trimethylation on histone H3 'Lys-27' (H3K27me3) of target genes. Involved in the regulation of embryo and seed endosperm development. FIE1-containing PcG complex in seed endosperm regulates the expression of various transcription factors by trimethylation on histone H3 'Lys-27' (H3K27me3) of target genes. Involved in the overall expression regulation of nutrient metabolism genes, such as prolamin synthesis and seed storage protein synthesis genes. Can regulate valine, leucine and isoleucine metabolism-related genes. The polypeptide is Polycomb group protein FIE1 (Oryza sativa subsp. japonica (Rice)).